Consider the following 317-residue polypeptide: Pseudouridine-5'-phosphate glycosidase 1 (317 aa).

The active-site Proton donor is E40. Residues K101 and V121 each coordinate substrate. Mn(2+) is bound at residue D153. Residue 155-157 (SAD) coordinates substrate. Residue K174 is the Nucleophile of the active site.

The protein belongs to the pseudouridine-5'-phosphate glycosidase family. As to quaternary structure, homotrimer. The cofactor is Mn(2+).

It carries out the reaction D-ribose 5-phosphate + uracil = psi-UMP + H2O. Its function is as follows. Catalyzes the reversible cleavage of pseudouridine 5'-phosphate (PsiMP) to ribose 5-phosphate and uracil. Functions biologically in the cleavage direction, as part of a pseudouridine degradation pathway. The chain is Pseudouridine-5'-phosphate glycosidase 1 from Rhizobium johnstonii (strain DSM 114642 / LMG 32736 / 3841) (Rhizobium leguminosarum bv. viciae).